The following is a 310-amino-acid chain: GTPase Era (310 aa).

Positions 17–184 constitute an Era-type G domain; sequence RSGFVALIGA…MDYLAERLPE (168 aa). Residues 25–32 are G1; that stretch reads GATNAGKS. 25–32 is a binding site for GTP; it reads GATNAGKS. Residues 51–55 form a G2 region; it reads QTTRA. Residues 72-75 are G3; that stretch reads DTPG. GTP contacts are provided by residues 72-76 and 134-137; these read DTPGI and NKVD. Residues 134–137 form a G4 region; the sequence is NKVD. A G5 region spans residues 163-165; sequence ISA. The region spanning 215-292 is the KH type-2 domain; it reads LHQELPYASH…HLFLFVKVRE (78 aa).

It belongs to the TRAFAC class TrmE-Era-EngA-EngB-Septin-like GTPase superfamily. Era GTPase family. In terms of assembly, monomer.

The protein resides in the cytoplasm. It localises to the cell inner membrane. An essential GTPase that binds both GDP and GTP, with rapid nucleotide exchange. Plays a role in 16S rRNA processing and 30S ribosomal subunit biogenesis and possibly also in cell cycle regulation and energy metabolism. This is GTPase Era from Sinorhizobium medicae (strain WSM419) (Ensifer medicae).